The sequence spans 207 residues: Serotonin N-acetyltransferase (207 aa).

The segment at 1–28 is disordered; it reads MSTQSTHPLKPEAPRLPPGIPESPSCQR. A Phosphothreonine; by PKA modification is found at threonine 31. Positions 35 to 194 constitute an N-acetyltransferase domain; sequence SEFRCLTPED…SLTFMELHCS (160 aa). Leucine 124 is a substrate binding site. Acetyl-CoA is bound by residues 124-126 and 132-137; these read LAV and QQGRGP. Residue methionine 159 coordinates substrate. 168 to 170 contributes to the acetyl-CoA binding site; sequence YER. The residue at position 205 (serine 205) is a Phosphoserine.

Belongs to the acetyltransferase family. AANAT subfamily. In terms of assembly, monomer. Interacts with several 14-3-3 proteins, including YWHAB, YWHAE, YWHAG and YWHAZ, preferentially when phosphorylated at Thr-31. Phosphorylation on Ser-205 also allows binding to YWHAZ, but with lower affinity. The interaction with YWHAZ considerably increases affinity for arylalkylamines and acetyl-CoA and protects the enzyme from dephosphorylation and proteasomal degradation. It may also prevent thiol-dependent inactivation. In terms of processing, cAMP-dependent phosphorylation on both N-terminal Thr-31 and C-terminal Ser-205 regulates AANAT activity by promoting interaction with 14-3-3 proteins. Highly expressed in pineal gland and at lower levels in the retina. Weak expression in several brain regions and in the pituitary gland.

Its subcellular location is the cytoplasm. The catalysed reaction is a 2-arylethylamine + acetyl-CoA = an N-acetyl-2-arylethylamine + CoA + H(+). It functions in the pathway aromatic compound metabolism; melatonin biosynthesis; melatonin from serotonin: step 1/2. In terms of biological role, controls the night/day rhythm of melatonin production in the pineal gland. Catalyzes the N-acetylation of serotonin into N-acetylserotonin, the penultimate step in the synthesis of melatonin. This Homo sapiens (Human) protein is Serotonin N-acetyltransferase (AANAT).